The chain runs to 1164 residues: Shugoshin 2A (1164 aa).

The stretch at 62–113 (LSKEKENSRRITTEKMQLQKEVEKLNFENTFLRLKLNTLNKKLVEIESHVSN) forms a coiled coil. 5 disordered regions span residues 160-269 (SEND…VTMR), 287-314 (HQPT…NTQR), 390-492 (RKVK…PFSR), 521-541 (TFVI…DKDT), and 917-992 (PLDS…ETHG). Low complexity predominate over residues 182-198 (SKTSPDSTSSVSRQPSS). Composition is skewed to polar residues over residues 238 to 247 (DQSPKSSLSE) and 288 to 299 (QPTSSPGSNWNN). Residues 390-412 (RKVKGASSDKKRESSKRECKDGS) show a composition bias toward basic and acidic residues. Polar residues predominate over residues 443–472 (CISSTEQPSQVNTQKKRTLQNSSDQENIQN). Residues 525 to 541 (RKSEKDNLFPNQEDKDT) are compositionally biased toward basic and acidic residues. A compositionally biased stretch (polar residues) spans 934–948 (GEQTNLPKMQKQSAG). At Ser-1042 the chain carries Phosphoserine. Residues 1092–1164 (ITTGTRNPHH…EPSLRSKMRR (73 aa)) form a disordered region. Residues 1112–1125 (TSLVLVDTSSVSDT) are compositionally biased toward low complexity. Polar residues predominate over residues 1126 to 1140 (NPANPENESEGQSSH).

Belongs to the shugoshin family. Part of an astrin (SPAG5)-kinastrin (SKAP) complex containing KNSTRN, SPAG5, PLK1, DYNLL1 and SGO2A. Interacts with CDCA8. Interacts with PPP2CA. Ubiquitously expressed in proliferating cells. Highly expressed in the testis and oocytes.

It is found in the nucleus. Its subcellular location is the chromosome. The protein resides in the centromere. The protein localises to the kinetochore. Functionally, cooperates with PPP2CA to protect centromeric cohesin from separase-mediated cleavage in oocytes specifically during meiosis I. Has a crucial role in protecting REC8 at centromeres from cleavage by separase. During meiosis, protects centromeric cohesion complexes until metaphase II/anaphase II transition, preventing premature release of meiosis-specific REC8 cohesin complexes from anaphase I centromeres. Is thus essential for an accurate gametogenesis. May act by targeting PPP2CA to centromeres, thus leading to cohesin dephosphorylation. Essential for recruiting KIF2C to the inner centromere and for correcting defective kinetochore attachments. Involved in centromeric enrichment of AUKRB in prometaphase. The protein is Shugoshin 2A of Mus musculus (Mouse).